Consider the following 450-residue polypeptide: C4-dicarboxylate transport protein (450 aa).

8 helical membrane passes run 25 to 45 (VVFAIIIGVLLGHFQPEYGAA), 56 to 76 (LIKMIIAPVIFLTIVTGIASM), 90 to 110 (MAYFLTFSTLALVVGLVVANV), 162 to 182 (ILQVLLVAVLFGVSLAMVGDA), 200 to 220 (LVNIVMKAAPIGAFGAMAFTI), 234 to 254 (LVLTFYITSAVFVLVVLGAVA), 319 to 339 (IYMTLAALFIAQATDTHLTLG), and 367 to 387 (AATLAVVPEVPVAGMALILGV).

It belongs to the dicarboxylate/amino acid:cation symporter (DAACS) (TC 2.A.23) family.

It is found in the cell inner membrane. Responsible for the transport of dicarboxylates such as succinate, fumarate, and malate from the periplasm across the membrane. This chain is C4-dicarboxylate transport protein, found in Acidovorax sp. (strain JS42).